Reading from the N-terminus, the 147-residue chain is Hemoglobin subunit epsilon (147 aa).

In terms of domain architecture, Globin spans 3–147; sequence HWSAEEKQLI…VAHALPRKYH (145 aa). The heme b site is built by histidine 64 and histidine 93.

This sequence belongs to the globin family. Heterotetramer of two epsilon chains and two alpha chains. As to expression, red blood cells.

Functionally, beta-type chain found in early embryos. In Cairina moschata (Muscovy duck), this protein is Hemoglobin subunit epsilon (HBE).